The sequence spans 102 residues: Large ribosomal subunit protein uL24 (102 aa).

This sequence belongs to the universal ribosomal protein uL24 family. In terms of assembly, part of the 50S ribosomal subunit.

In terms of biological role, one of two assembly initiator proteins, it binds directly to the 5'-end of the 23S rRNA, where it nucleates assembly of the 50S subunit. One of the proteins that surrounds the polypeptide exit tunnel on the outside of the subunit. In Macrococcus caseolyticus (strain JCSC5402) (Macrococcoides caseolyticum), this protein is Large ribosomal subunit protein uL24.